Consider the following 345-residue polypeptide: Microtubule-associated protein Jupiter (345 aa).

The span at 1–14 (MISNFDCTDNQASS) shows a compositional bias: polar residues. Residues 1-34 (MISNFDCTDNQASSKVLRPPGGGSSDIFGSEMPQ) form a disordered region. At Ser-24 the chain carries Phosphoserine. The residue at position 35 (Thr-35) is a Phosphothreonine. Positions 78–87 (QKTVDSHNRL) are enriched in basic and acidic residues. The interval 78–100 (QKTVDSHNRLFGEPTRPITPGKN) is disordered. Residues Thr-92 and Thr-96 each carry the phosphothreonine modification. Phosphoserine is present on residues Ser-105, Ser-134, and Ser-145. 2 disordered regions span residues 127–241 (HYNG…QPHS) and 300–345 (EGNP…SGLW). Low complexity predominate over residues 132–145 (SGSVSSASSSVSSS). A compositionally biased stretch (polar residues) spans 146 to 164 (TENLKMNSGSRSVFRNMST). The segment covering 177-191 (LCPPSPVRIEPPTPP) has biased composition (pro residues). Composition is skewed to polar residues over residues 212–226 (DNSTYTKSDQVNEAC) and 315–326 (DYNQRQESSNAG).

This sequence belongs to the MAP Jupiter family.

The protein localises to the nucleus. Its subcellular location is the cytoplasm. It localises to the cytoskeleton. It is found in the spindle. In terms of biological role, binds to all microtubule populations. The chain is Microtubule-associated protein Jupiter from Drosophila erecta (Fruit fly).